The following is a 260-amino-acid chain: Dehydrogenase/reductase SDR family member 11 (260 aa).

Residues 1–30 (MTRAGMERWRDRLALVTGASGGIGAAVARA) form the signal peptide. Residues 18-23 (GASGGI), 43-44 (RT), glutamate 49, 70-71 (DL), and asparagine 97 each bind NADP(+). Substrate contacts are provided by serine 151 and tyrosine 166. NADP(+)-binding positions include tyrosine 166, lysine 170, 201 to 204 (VETQ), and lysine 208. The active-site Proton acceptor is the tyrosine 166.

Belongs to the short-chain dehydrogenases/reductases (SDR) family. In terms of assembly, homotetramer.

The protein resides in the secreted. The enzyme catalyses a 3beta-hydroxysteroid + NADP(+) = a 3-oxosteroid + NADPH + H(+). It carries out the reaction 17beta-estradiol + NAD(+) = estrone + NADH + H(+). It catalyses the reaction 17beta-estradiol + NADP(+) = estrone + NADPH + H(+). It functions in the pathway steroid biosynthesis; estrogen biosynthesis. Inhibited by flavonoids including apigenin, luteolin, genistein, kaempferol and quercetin and also by carbenoxolone, zearalenone, glycyrrhetinic, curcumin and flufenamic acid. In terms of biological role, catalyzes the conversion of the 17-keto group of estrone, 4- and 5-androstenes and 5-alpha-androstanes into their 17-beta-hydroxyl metabolites and the conversion of the 3-keto group of 3-, 3,17- and 3,20- diketosteroids into their 3-hydroxyl metabolites. Exhibits reductive 3-beta-hydroxysteroid dehydrogenase activity toward 5-beta-androstanes, 5-beta-pregnanes, 4-pregnenes and bile acids. May also reduce endogenous and exogenous alpha-dicarbonyl compounds and xenobiotic alicyclic ketones. The protein is Dehydrogenase/reductase SDR family member 11 (Dhrs11) of Mus musculus (Mouse).